Here is a 419-residue protein sequence, read N- to C-terminus: Serine--tRNA ligase (419 aa).

225-227 (TAE) lines the L-serine pocket. 256 to 258 (RKE) contacts ATP. Glutamate 279 lines the L-serine pocket. Residue 343 to 346 (EISS) participates in ATP binding. Serine 378 serves as a coordination point for L-serine.

This sequence belongs to the class-II aminoacyl-tRNA synthetase family. Type-1 seryl-tRNA synthetase subfamily. As to quaternary structure, homodimer. The tRNA molecule binds across the dimer.

The protein localises to the cytoplasm. It catalyses the reaction tRNA(Ser) + L-serine + ATP = L-seryl-tRNA(Ser) + AMP + diphosphate + H(+). The enzyme catalyses tRNA(Sec) + L-serine + ATP = L-seryl-tRNA(Sec) + AMP + diphosphate + H(+). It functions in the pathway aminoacyl-tRNA biosynthesis; selenocysteinyl-tRNA(Sec) biosynthesis; L-seryl-tRNA(Sec) from L-serine and tRNA(Sec): step 1/1. In terms of biological role, catalyzes the attachment of serine to tRNA(Ser). Is also able to aminoacylate tRNA(Sec) with serine, to form the misacylated tRNA L-seryl-tRNA(Sec), which will be further converted into selenocysteinyl-tRNA(Sec). In Pelagibacter ubique (strain HTCC1062), this protein is Serine--tRNA ligase.